Reading from the N-terminus, the 256-residue chain is uncharacterized protein (256 aa).

The next 4 membrane-spanning stretches (helical) occupy residues 5–25 (FIEG…NYLL), 30–50 (ILST…LKVF), 64–84 (VVIF…DPAI), and 105–125 (VGIT…LGII). Residues 198–256 (EKTKSLDSISHSSSSSRKSSTELKIPPVETRIVAEIPVPSSVKRRRHRPNKSMGSIKNS) are disordered. Low complexity predominate over residues 203–215 (LDSISHSSSSSRK). 2 positions are modified to phosphoserine: Ser-210 and Ser-211.

It is found in the endoplasmic reticulum membrane. The protein localises to the nucleus membrane. This is an uncharacterized protein from Schizosaccharomyces pombe (strain 972 / ATCC 24843) (Fission yeast).